We begin with the raw amino-acid sequence, 208 residues long: MSDTVVASAAVQAPAKTVKSPKAAKTTKVPKAKKPVAHPPYINMVTAAINGLKERKGSSKIAILKYITKNYNVGDQIIKINARLRDTLNKGVVSKALVQSVGTGASGRFRVTEKKAAAAKKPVAKKAATGEKKAKKPVAQKAATGEKKAKKTTATKTKKTADKVKKVKSPKKIAKPTAKKVAKSPAKKSAPKKAAAAKPAKKAVAPKT.

N-acetylserine is present on serine 2. Positions 37–113 constitute an H15 domain; that stretch reads AHPPYINMVT…GASGRFRVTE (77 aa). A disordered region spans residues 113 to 208; the sequence is EKKAAAAKKP…PAKKAVAPKT (96 aa). 2 stretches are compositionally biased toward basic residues: residues 148-158 and 165-191; these read KAKKTTATKTK and KKVKSPKKIAKPTAKKVAKSPAKKSAP. Residues 192-208 show a composition bias toward low complexity; that stretch reads KKAAAAKPAKKAVAPKT.

Belongs to the histone H1/H5 family.

The protein localises to the nucleus. The protein resides in the chromosome. In terms of biological role, histones H1 are necessary for the condensation of nucleosome chains into higher-order structures. The chain is Histone H1.3 (hil-3) from Caenorhabditis elegans.